A 221-amino-acid polypeptide reads, in one-letter code: NEDD8 ultimate buster 1 (221 aa).

UBA domains follow at residues 1-19 (LGLRACDGNVDHAAVHIAN), 30-76 (EERE…LLHN), and 95-135 (SPSQ…LVHN). The tract at residues 136-193 (GGRLPPDLQLSAEDSSSTPSTSPSDSAGTSSASTDEDMETEAVNEILEDIPEHEEDYL) is disordered. The span at 146-168 (SAEDSSSTPSTSPSDSAGTSSAS) shows a compositional bias: low complexity. Positions 169 to 193 (TDEDMETEAVNEILEDIPEHEEDYL) are enriched in acidic residues.

As to quaternary structure, directly interacts with NEDD8 and PSMD4/S5a, a member of the regulatory subunit of the 26S proteasome. Interacts with AIPL1.

Its subcellular location is the nucleus. In terms of biological role, specific down-regulator of the NEDD8 conjugation system. Recruits NEDD8 and its conjugates to the proteasome for degradation. The chain is NEDD8 ultimate buster 1 (NUB1) from Bos taurus (Bovine).